Here is a 506-residue protein sequence, read N- to C-terminus: Acyl-CoA-binding domain-containing protein 5 (506 aa).

The ACB domain occupies tyrosine 44–methionine 133. An acyl-CoA is bound by residues isoleucine 55–phenylalanine 64, tyrosine 75–lysine 79, lysine 101, and tyrosine 120. Positions alanine 175 to serine 217 are disordered. Residues lysine 181–aspartate 209 adopt a coiled-coil conformation. 6 positions are modified to phosphoserine: serine 184, serine 185, serine 187, serine 191, serine 206, and serine 233. The segment covering glutamate 198–serine 217 has biased composition (basic and acidic residues). Disordered regions lie at residues phenylalanine 234–methionine 302 and alanine 345–arginine 417. Residues serine 238–threonine 257 are compositionally biased toward basic and acidic residues. The segment covering aspartate 258 to threonine 267 has biased composition (polar residues). Serine 301 carries the phosphoserine modification. Basic and acidic residues predominate over residues glycine 348 to arginine 360. Position 403 is a phosphoserine (serine 403). Residues aspartate 406–serine 416 show a composition bias toward basic and acidic residues. The stretch at leucine 426 to serine 451 forms a coiled coil. Lysine 444 bears the N6-acetyllysine mark. A helical membrane pass occupies residues glycine 478–tyrosine 498.

The protein belongs to the ATG37 family.

It localises to the peroxisome membrane. Its function is as follows. Acyl-CoA binding protein which acts as the peroxisome receptor for pexophagy but is dispensable for aggrephagy and nonselective autophagy. Binds medium- and long-chain acyl-CoA esters. In Rattus norvegicus (Rat), this protein is Acyl-CoA-binding domain-containing protein 5 (Acbd5).